We begin with the raw amino-acid sequence, 265 residues long: Secreted RxLR effector protein 146 (265 aa).

The N-terminal stretch at 1 to 25 is a signal peptide; sequence MRYYTQVVAASLVATLAVVDSIVFA. The short motif at 32 to 50 is the RxLR-dEER element; it reads RFLRQDGATVTRGGKGEER. 2 N-linked (GlcNAc...) asparagine glycosylation sites follow: Asn-71 and Asn-148.

This sequence belongs to the RxLR effector family.

It is found in the secreted. The protein resides in the host nucleus. It localises to the host cytoplasm. In terms of biological role, secreted effector that completely suppresses the host cell death induced by cell death-inducing proteins. This chain is Secreted RxLR effector protein 146, found in Plasmopara viticola (Downy mildew of grapevine).